The sequence spans 347 residues: MARNGNPQFPDERSTATRAKATEPEELDDRFSDLEPEEDSPFLRSQKRVPVRRGPLPSKKAANRVKIALIVLGVLVVIGGVWMALSAYGEHSWRFRLESSDSIEVGGNEHMSRGEITRVFGGDISRNIFAVPLDERKKQVEELPWVESATVMRILPDRIRVQVTERKPVAFAQIGSRVQLIDAHGVLMEMPFSTTNKYSFPVISGMHENEPLSTRSARMKIYQELVKELDASGEHNSKSLSEVDVSDPDDVKVTVEDADGAVLVHLGSQNFADRFHLYVTHLKEWRSQYQHLDSVDLRYDRQVILNPDSHPSAAKPTAPAVAPAVEKPAVAKPAVAKPTAHTSGRRH.

The segment at 1–55 (MARNGNPQFPDERSTATRAKATEPEELDDRFSDLEPEEDSPFLRSQKRVPVRRGP) is disordered. At 1-66 (MARNGNPQFP…PSKKAANRVK (66 aa)) the chain is on the cytoplasmic side. Residues 10–33 (PDERSTATRAKATEPEELDDRFSD) are compositionally biased toward basic and acidic residues. A helical membrane pass occupies residues 67–87 (IALIVLGVLVVIGGVWMALSA). At 88–347 (YGEHSWRFRL…PTAHTSGRRH (260 aa)) the chain is on the periplasmic side. Positions 98–166 (ESSDSIEVGG…DRIRVQVTER (69 aa)) constitute a POTRA domain. Positions 308–347 (DSHPSAAKPTAPAVAPAVEKPAVAKPAVAKPTAHTSGRRH) are disordered. Residues 313-340 (AAKPTAPAVAPAVEKPAVAKPAVAKPTA) show a composition bias toward low complexity.

This sequence belongs to the FtsQ/DivIB family. FtsQ subfamily.

It localises to the cell inner membrane. In terms of biological role, essential cell division protein. In Koribacter versatilis (strain Ellin345), this protein is Cell division protein FtsQ.